The primary structure comprises 425 residues: D-arabinitol transporter (425 aa).

Over 1 to 7 (MSINNKQ) the chain is Cytoplasmic. A helical transmembrane segment spans residues 8-28 (WLGLPLNLLWGYIAIAVFMTG). Residues 29–51 (DGFELAFLSHYIKALGFSPAEAS) are Extracellular-facing. The chain crosses the membrane as a helical span at residues 52-72 (FAFTLYGLAAALSAWISGVVA). The Cytoplasmic segment spans residues 73 to 80 (EIITPLKT). Residues 81–101 (MMIGFVLWCVFHVLFLVFGLG) form a helical membrane-spanning segment. Residues 102 to 107 (HANYAL) lie on the Extracellular side of the membrane. A helical membrane pass occupies residues 108-128 (ILLFYGIRGFAYPLFLYSFIV). The Cytoplasmic segment spans residues 129 to 141 (AIVHNVKSDNASS). A helical membrane pass occupies residues 142–162 (AIGWFWAVYSIGIGVFGSYIP). Residues 163 to 172 (SFTIPHIGEM) lie on the Extracellular side of the membrane. Residues 173–193 (GTLWLALAFCLTGGVIALVSL) form a helical membrane-spanning segment. Residues 194–237 (RHIQTPQHMQNLTTREKFSELGRAATLLYTNRNILLSSMVRIIN) are Cytoplasmic-facing. A helical membrane pass occupies residues 238–258 (TLSLFGFAVIMPMMFVDELGF). Topologically, residues 259 to 263 (STSEW) are extracellular. The helical transmembrane segment at 264-284 (LQVWAVFFFTTIFSNVLWGIL) threads the bilayer. Topologically, residues 285–295 (GEKLGWMKVVR) are cytoplasmic. A helical membrane pass occupies residues 296 to 316 (WFGCIGMALSSLAFYYIPQHF). The Extracellular portion of the chain corresponds to 317-323 (GHSFAMA). The chain crosses the membrane as a helical span at residues 324–344 (LIPAIALGIFVAAFVPLAAVF). Topologically, residues 345–360 (PALEPKHKGAAISVYN) are cytoplasmic. The helical transmembrane segment at 361-381 (LSAGMSNFLAPAIAVVLLPFF) threads the bilayer. The Extracellular portion of the chain corresponds to 382–383 (ST). A helical transmembrane segment spans residues 384–404 (IGVVIAYTALYVVAFFLCAFI). Over 405–425 (RVEQPGFSHKEATAREQVEFS) the chain is Cytoplasmic.

The protein belongs to the major facilitator superfamily. Sugar transporter (TC 2.A.1.1) family. CsbX subfamily.

The protein resides in the cell membrane. The sequence is that of D-arabinitol transporter (dalT) from Klebsiella pneumoniae.